A 106-amino-acid chain; its full sequence is Large ribosomal subunit protein uL30 (106 aa).

This sequence belongs to the universal ribosomal protein uL30 family. As to quaternary structure, part of the 50S ribosomal subunit.

This is Large ribosomal subunit protein uL30 from Ruthia magnifica subsp. Calyptogena magnifica.